A 191-amino-acid polypeptide reads, in one-letter code: MRVITLAGSPRFPSRSSSLLEYAREKLNGLDVEVYHWNLQNFAPEDLLYARFDSPALKTFTEQLQQADGLIVATPVYKAAYSGALKTLLDLLPERALQGKVVLPLATGGTVAHLLAVDYALKPVLSALKAQEILHGVFADDSQVIDYHHRPQFTPNLQTRLDTALETFWQALHRRDVQVPDLLSLRGNAHA.

The protein belongs to the SsuE family. As to quaternary structure, homodimer.

It carries out the reaction FMNH2 + NADP(+) = FMN + NADPH + 2 H(+). Catalyzes an NADPH-dependent reduction of FMN, but is also able to reduce FAD or riboflavin. This is FMN reductase (NADPH) (ssuE) from Escherichia coli (strain K12).